We begin with the raw amino-acid sequence, 170 residues long: Myosin regulatory light chain 11 (170 aa).

Residue A2 is modified to N,N,N-trimethylalanine. S16 and S17 each carry phosphoserine. Residues T26 and T36 each carry the phosphothreonine modification. The 36-residue stretch at 26–61 (TQIQEFKEAFTVIDQNRDGIIDKEDLRDTFAAMGRL) folds into the EF-hand 1 domain. Ca(2+)-binding residues include D39, N41, D43, and D50. Residue S76 is modified to Phosphoserine. EF-hand domains lie at 96–131 (DPEDVITGAFKVLDPEGKGTIKKQFLEELLTTQCDR) and 132–167 (FSQEEIKNMWAAFPPDVGGNVDYKNICYVITHGDAK). Position 102 is a phosphothreonine (T102).

In terms of assembly, myosin is a hexamer of 2 heavy chains and 4 light chains. N,N,N-trimethylalanine found in this myosin light chain would not have been detected in the N-terminal tryptic peptide in PubMed:863872 and PubMed:352892 because it would remain trimethylated and ninhydrin negative after hydrolysis.

Its function is as follows. Myosin regulatory subunit that plays an essential role to maintain muscle integrity during early development. Plays a role in muscle contraction. In Oryctolagus cuniculus (Rabbit), this protein is Myosin regulatory light chain 11 (MYL11).